The sequence spans 126 residues: Glycine cleavage system H protein (126 aa).

Residues 22–104 form the Lipoyl-binding domain; that stretch reads IAYVGITDYA…YGEGWLIKMK (83 aa). The residue at position 63 (Lys-63) is an N6-lipoyllysine.

It belongs to the GcvH family. As to quaternary structure, the glycine cleavage system is composed of four proteins: P, T, L and H. (R)-lipoate serves as cofactor.

Functionally, the glycine cleavage system catalyzes the degradation of glycine. The H protein shuttles the methylamine group of glycine from the P protein to the T protein. The sequence is that of Glycine cleavage system H protein from Bacteroides thetaiotaomicron (strain ATCC 29148 / DSM 2079 / JCM 5827 / CCUG 10774 / NCTC 10582 / VPI-5482 / E50).